Reading from the N-terminus, the 413-residue chain is Dolichyl-diphosphooligosaccharide--protein glycosyltransferase 48 kDa subunit (413 aa).

Topologically, residues 1–383 (GPRSLVLLEN…QYERFIPSAY (383 aa)) are lumenal. The chain crosses the membrane as a helical span at residues 384 to 404 (PYYAGAFSMMVGLFMFSIVFL). Topologically, residues 405-413 (HMKEKEKSD) are cytoplasmic.

It belongs to the DDOST 48 kDa subunit family. Component of the oligosaccharyltransferase (OST) complex.

The protein localises to the endoplasmic reticulum. It is found in the endoplasmic reticulum membrane. It participates in protein modification; protein glycosylation. Functionally, subunit of the oligosaccharyl transferase (OST) complex that catalyzes the initial transfer of a defined glycan (Glc(3)Man(9)GlcNAc(2) in eukaryotes) from the lipid carrier dolichol-pyrophosphate to an asparagine residue within an Asn-X-Ser/Thr consensus motif in nascent polypeptide chains, the first step in protein N-glycosylation. N-glycosylation occurs cotranslationally and the complex associates with the Sec61 complex at the channel-forming translocon complex that mediates protein translocation across the endoplasmic reticulum (ER). All subunits are required for a maximal enzyme activity. Required for the assembly of both SST3A- and SS3B-containing OST complexes. This chain is Dolichyl-diphosphooligosaccharide--protein glycosyltransferase 48 kDa subunit, found in Gallus gallus (Chicken).